The chain runs to 131 residues: Profilin-8 (131 aa).

Cys13 and Cys115 are joined by a disulfide. The short motif at 81 to 97 is the Involved in PIP2 interaction element; that stretch reads AVIRGKKGAGGITIKKT. A Phosphothreonine modification is found at Thr111.

It belongs to the profilin family. As to quaternary structure, occurs in many kinds of cells as a complex with monomeric actin in a 1:1 ratio. Post-translationally, phosphorylated by MAP kinases.

The protein resides in the cytoplasm. The protein localises to the cytoskeleton. Its function is as follows. Binds to actin and affects the structure of the cytoskeleton. At high concentrations, profilin prevents the polymerization of actin, whereas it enhances it at low concentrations. This is Profilin-8 from Phleum pratense (Common timothy).